A 60-amino-acid chain; its full sequence is Protein YmjC (60 aa).

A disordered region spans residues 40 to 60; the sequence is HKPYPTNKMQTTSGKKVIQDR.

The chain is Protein YmjC (ymjC) from Escherichia coli (strain K12).